We begin with the raw amino-acid sequence, 213 residues long: Serine acetyltransferase (213 aa).

Belongs to the transferase hexapeptide repeat family.

The protein localises to the cytoplasm. It carries out the reaction L-serine + acetyl-CoA = O-acetyl-L-serine + CoA. It participates in amino-acid biosynthesis; L-cysteine biosynthesis; L-cysteine from L-serine: step 1/2. The protein is Serine acetyltransferase (cysE) of Staphylococcus aureus (strain COL).